An 887-amino-acid polypeptide reads, in one-letter code: MSENLYNDVDPIETRDWVQAIESVIRREGHKRAHFLIEQVLKTAKINRKEFFRSSFTSDYINTISREDEYEYPGNLILEKRIRSAIRWNAIMMVLRASKKNLELGGHLSSFQSSATIYEVCFNHFFQAKNHKDGGDLVYFQGHISPGIYARSFLEGRLSEEQIDNFRQEVDGIGLSSYPHPKLMPNFWQFPTVSMGLGPLCAIYQAKFLKYLHNRELKNTSKQIVYAFLGDGEMDEPESKGAISIAVREKLDNLIFIINCNLQRLDGPVVGNGKIVNELESFFYGAGWKVIKVIWGSRWDCLLKKDTSGKLIQLMNETVDGDYQTFKSKDGAYVRKYFFGKYKETYDLVKDMTDEEIWKLNRGGHDPKKMFNALKKAKETKYKPTVILAHTVKGYGMGVIAEGKNIAHQIKKININGIIHIRDRFNIPVSNDEINKLPYVTFKKNSEEYCYIHSQRKKLGGYIPFRLSSFTGKLILPKLIDFQSLLEEQKKDISTTVAFIRVLNIILKNNSIKHLIVPIIADEARTFGMEGLFRKIGIYSSSGQKYTPQDREQLAYYKEEKKGQILQEGINELGAASSWLAAATSYSTNDFPMILFYIYYSIFGFQRIGDLFWAAGDQQARGFLIGGTSGRTTLNGEGLQHEDGHSHIQSLTIPNCISYDPAFAYEVAVIIQDGLRRMYGPSQENIYYYITTINENYYMPAMPIGVEEGICKGIYKLKTLHGTTSKVQLIGSGAILRSVCEAAEILLKDYSITTDIYSVTSFTELARNGEDCERWNMLHPNEKNKIAYVKQIMNKNPTVAATDYMKLFAEQIRHYIPSQEYHVLGTDGFGRSDSRDKLRDHFEVNAYYIVIAALNLLANINDIKKKVVEDAIMKFNIDANKINPRLS.

Homodimer. Part of the PDH complex, consisting of multiple copies of pyruvate dehydrogenase (E1), dihydrolipoamide acetyltransferase (E2) and lipoamide dehydrogenase (E3). It depends on thiamine diphosphate as a cofactor.

The catalysed reaction is N(6)-[(R)-lipoyl]-L-lysyl-[protein] + pyruvate + H(+) = N(6)-[(R)-S(8)-acetyldihydrolipoyl]-L-lysyl-[protein] + CO2. Functionally, component of the pyruvate dehydrogenase (PDH) complex, that catalyzes the overall conversion of pyruvate to acetyl-CoA and CO(2). The polypeptide is Pyruvate dehydrogenase E1 component (aceE) (Buchnera aphidicola subsp. Acyrthosiphon pisum (strain APS) (Acyrthosiphon pisum symbiotic bacterium)).